The following is a 220-amino-acid chain: Uracil-DNA glycosylase (220 aa).

Asp-65 (proton acceptor) is an active-site residue.

The protein belongs to the uracil-DNA glycosylase (UDG) superfamily. UNG family.

It is found in the cytoplasm. It carries out the reaction Hydrolyzes single-stranded DNA or mismatched double-stranded DNA and polynucleotides, releasing free uracil.. Its function is as follows. Excises uracil residues from the DNA which can arise as a result of misincorporation of dUMP residues by DNA polymerase or due to deamination of cytosine. The protein is Uracil-DNA glycosylase of Phocaeicola vulgatus (strain ATCC 8482 / DSM 1447 / JCM 5826 / CCUG 4940 / NBRC 14291 / NCTC 11154) (Bacteroides vulgatus).